A 199-amino-acid polypeptide reads, in one-letter code: MSNTEQHQKKGQKNKVLLNNDIPFSKVFLIGEDGEKIGIKTKEEALDIARGEKKDLVLISVQPKPIARILDYGKFKYDRKKKEKEQKEKQTNINNRQIRLTPLIGDHDLLTKAKKTRELLLKGDRIKVSLKFKGREIARKELGIDTLNRFYEQVEDIAKIDKEPKLNQDRFLDMYLHPDKQKIAKYLKEKGEDNAKNEK.

The protein belongs to the IF-3 family. As to quaternary structure, monomer.

The protein resides in the cytoplasm. Functionally, IF-3 binds to the 30S ribosomal subunit and shifts the equilibrium between 70S ribosomes and their 50S and 30S subunits in favor of the free subunits, thus enhancing the availability of 30S subunits on which protein synthesis initiation begins. This is Translation initiation factor IF-3 from Mycoplasmopsis pulmonis (strain UAB CTIP) (Mycoplasma pulmonis).